A 563-amino-acid polypeptide reads, in one-letter code: Membrane protein insertase YidC (563 aa).

Residues 6–26 (TILWMIFSFSLLLLWNNWQIH) traverse the membrane as a helical segment. The disordered stretch occupies residues 36–68 (PPASSAASPAEGQQAAANGQAATPSVPTTPAAA). 4 consecutive transmembrane segments (helical) span residues 373–393 (WGWAIVALTVIIKAVFFPLAA), 443–463 (LPMVVQIPVFIALYWVLLASV), 482–502 (PYFILPAVMMATMFLQIKLNP), and 512–532 (VMMIMPLVFGGMMFFFPAGLV).

The protein belongs to the OXA1/ALB3/YidC family. Type 1 subfamily. In terms of assembly, interacts with the Sec translocase complex via SecD. Specifically interacts with transmembrane segments of nascent integral membrane proteins during membrane integration.

It localises to the cell inner membrane. Required for the insertion and/or proper folding and/or complex formation of integral membrane proteins into the membrane. Involved in integration of membrane proteins that insert both dependently and independently of the Sec translocase complex, as well as at least some lipoproteins. Aids folding of multispanning membrane proteins. The sequence is that of Membrane protein insertase YidC from Bordetella petrii (strain ATCC BAA-461 / DSM 12804 / CCUG 43448).